We begin with the raw amino-acid sequence, 130 residues long: Small ribosomal subunit protein uS8 (130 aa).

Lys88 is subject to N6-succinyllysine.

Belongs to the universal ribosomal protein uS8 family. In terms of assembly, component of the small ribosomal subunit. Part of the small subunit (SSU) processome, composed of more than 70 proteins and the RNA chaperone small nucleolar RNA (snoRNA) U3.

It localises to the cytoplasm. The protein localises to the nucleus. The protein resides in the nucleolus. Its function is as follows. Component of the small ribosomal subunit. The ribosome is a large ribonucleoprotein complex responsible for the synthesis of proteins in the cell. Part of the small subunit (SSU) processome, first precursor of the small eukaryotic ribosomal subunit. During the assembly of the SSU processome in the nucleolus, many ribosome biogenesis factors, an RNA chaperone and ribosomal proteins associate with the nascent pre-rRNA and work in concert to generate RNA folding, modifications, rearrangements and cleavage as well as targeted degradation of pre-ribosomal RNA by the RNA exosome. Required for proper erythropoiesis. The chain is Small ribosomal subunit protein uS8 (Rps15a) from Mus musculus (Mouse).